We begin with the raw amino-acid sequence, 397 residues long: Arginine biosynthesis bifunctional protein ArgJ (397 aa).

Substrate-binding residues include Thr-147, Lys-173, Thr-184, Glu-270, Asn-392, and Thr-397. The active-site Nucleophile is the Thr-184.

The protein belongs to the ArgJ family. Heterotetramer of two alpha and two beta chains.

Its subcellular location is the cytoplasm. It catalyses the reaction N(2)-acetyl-L-ornithine + L-glutamate = N-acetyl-L-glutamate + L-ornithine. The enzyme catalyses L-glutamate + acetyl-CoA = N-acetyl-L-glutamate + CoA + H(+). The protein operates within amino-acid biosynthesis; L-arginine biosynthesis; L-ornithine and N-acetyl-L-glutamate from L-glutamate and N(2)-acetyl-L-ornithine (cyclic): step 1/1. Its pathway is amino-acid biosynthesis; L-arginine biosynthesis; N(2)-acetyl-L-ornithine from L-glutamate: step 1/4. Its function is as follows. Catalyzes two activities which are involved in the cyclic version of arginine biosynthesis: the synthesis of N-acetylglutamate from glutamate and acetyl-CoA as the acetyl donor, and of ornithine by transacetylation between N(2)-acetylornithine and glutamate. The protein is Arginine biosynthesis bifunctional protein ArgJ of Staphylococcus epidermidis (strain ATCC 35984 / DSM 28319 / BCRC 17069 / CCUG 31568 / BM 3577 / RP62A).